The chain runs to 272 residues: 2-dehydro-3-deoxyphosphooctonate aldolase (272 aa).

Belongs to the KdsA family.

It is found in the cytoplasm. It catalyses the reaction D-arabinose 5-phosphate + phosphoenolpyruvate + H2O = 3-deoxy-alpha-D-manno-2-octulosonate-8-phosphate + phosphate. It functions in the pathway carbohydrate biosynthesis; 3-deoxy-D-manno-octulosonate biosynthesis; 3-deoxy-D-manno-octulosonate from D-ribulose 5-phosphate: step 2/3. It participates in bacterial outer membrane biogenesis; lipopolysaccharide biosynthesis. The protein is 2-dehydro-3-deoxyphosphooctonate aldolase of Geotalea daltonii (strain DSM 22248 / JCM 15807 / FRC-32) (Geobacter daltonii).